We begin with the raw amino-acid sequence, 118 residues long: Nucleoid-associated protein CTN_1899 (118 aa).

This sequence belongs to the YbaB/EbfC family. As to quaternary structure, homodimer.

It is found in the cytoplasm. The protein resides in the nucleoid. In terms of biological role, binds to DNA and alters its conformation. May be involved in regulation of gene expression, nucleoid organization and DNA protection. This is Nucleoid-associated protein CTN_1899 from Thermotoga neapolitana (strain ATCC 49049 / DSM 4359 / NBRC 107923 / NS-E).